We begin with the raw amino-acid sequence, 335 residues long: Acetyl-coenzyme A carboxylase carboxyl transferase subunit alpha (335 aa).

Residues 40–294 form the CoA carboxyltransferase C-terminal domain; it reads QLETLAARRR…KEAIEKHLNA (255 aa).

This sequence belongs to the AccA family. Acetyl-CoA carboxylase is a heterohexamer composed of biotin carboxyl carrier protein (AccB), biotin carboxylase (AccC) and two subunits each of ACCase subunit alpha (AccA) and ACCase subunit beta (AccD).

It localises to the cytoplasm. It catalyses the reaction N(6)-carboxybiotinyl-L-lysyl-[protein] + acetyl-CoA = N(6)-biotinyl-L-lysyl-[protein] + malonyl-CoA. Its pathway is lipid metabolism; malonyl-CoA biosynthesis; malonyl-CoA from acetyl-CoA: step 1/1. Component of the acetyl coenzyme A carboxylase (ACC) complex. First, biotin carboxylase catalyzes the carboxylation of biotin on its carrier protein (BCCP) and then the CO(2) group is transferred by the carboxyltransferase to acetyl-CoA to form malonyl-CoA. This is Acetyl-coenzyme A carboxylase carboxyl transferase subunit alpha from Prochlorococcus marinus (strain MIT 9215).